The primary structure comprises 162 residues: NADH-quinone oxidoreductase subunit I (162 aa).

2 4Fe-4S ferredoxin-type domains span residues 54–83 (RRYE…IESE) and 93–122 (TRYD…ETQI). Residues C63, C66, C69, C73, C102, C105, C108, and C112 each coordinate [4Fe-4S] cluster.

It belongs to the complex I 23 kDa subunit family. As to quaternary structure, NDH-1 is composed of 14 different subunits. Subunits NuoA, H, J, K, L, M, N constitute the membrane sector of the complex. The cofactor is [4Fe-4S] cluster.

It is found in the cell inner membrane. The catalysed reaction is a quinone + NADH + 5 H(+)(in) = a quinol + NAD(+) + 4 H(+)(out). NDH-1 shuttles electrons from NADH, via FMN and iron-sulfur (Fe-S) centers, to quinones in the respiratory chain. The immediate electron acceptor for the enzyme in this species is believed to be ubiquinone. Couples the redox reaction to proton translocation (for every two electrons transferred, four hydrogen ions are translocated across the cytoplasmic membrane), and thus conserves the redox energy in a proton gradient. This Burkholderia ambifaria (strain MC40-6) protein is NADH-quinone oxidoreductase subunit I.